Consider the following 311-residue polypeptide: Mediator of RNA polymerase II transcription subunit 27-B (311 aa).

This sequence belongs to the Mediator complex subunit 27 family. As to quaternary structure, component of the Mediator complex.

The protein localises to the nucleus. Functionally, component of the Mediator complex, a coactivator involved in the regulated transcription of nearly all RNA polymerase II-dependent genes. Mediator functions as a bridge to convey information from gene-specific regulatory proteins to the basal RNA polymerase II transcription machinery. Mediator is recruited to promoters by direct interactions with regulatory proteins and serves as a scaffold for the assembly of a functional preinitiation complex with RNA polymerase II and the general transcription factors. This chain is Mediator of RNA polymerase II transcription subunit 27-B (med27-b), found in Xenopus laevis (African clawed frog).